We begin with the raw amino-acid sequence, 252 residues long: ATP synthase subunit a (252 aa).

6 helical membrane-spanning segments follow: residues 29–49 (FTNVSFFIIATVVATSVFLFI), 87–107 (FFPLVFSLFTFILVANFIGLF), 116–136 (QIMITFSLAMLVILTVVGYGF), 146–166 (LFVPSGVPVVILPLVTMIEVI), 183–205 (MLAGHITLKVFSGFIVSMIELGI), and 219–239 (VAITALEFLVAFLQAYVFTVL).

This sequence belongs to the ATPase A chain family. In terms of assembly, F-type ATPases have 2 components, CF(1) - the catalytic core - and CF(0) - the membrane proton channel. CF(1) has five subunits: alpha(3), beta(3), gamma(1), delta(1), epsilon(1). CF(0) has three main subunits: a(1), b(2) and c(9-12). The alpha and beta chains form an alternating ring which encloses part of the gamma chain. CF(1) is attached to CF(0) by a central stalk formed by the gamma and epsilon chains, while a peripheral stalk is formed by the delta and b chains.

The protein resides in the cell inner membrane. Functionally, key component of the proton channel; it plays a direct role in the translocation of protons across the membrane. The polypeptide is ATP synthase subunit a (Bartonella quintana (strain Toulouse) (Rochalimaea quintana)).